The primary structure comprises 37 residues: GLFTLIKGAAKLIGKTVAKEAGKTGLELMACKITNQC.

Cysteines 31 and 37 form a disulfide.

Expressed by the skin glands.

It is found in the secreted. Its function is as follows. Has antibacterial activity against E.coli and S.aureus strains. This Odorrana jingdongensis (Jingdong frog) protein is Esculentin-2JDa.